The sequence spans 437 residues: Eukaryotic peptide chain release factor subunit 1 (437 aa).

An N-acetylalanine modification is found at Ala2. The NIKS motif; plays an important role in translational termination signature appears at 61–64; that stretch reads NIKS. The residue at position 63 (Lys63) is a 4-hydroxylysine. Lys87 is covalently cross-linked (Glycyl lysine isopeptide (Lys-Gly) (interchain with G-Cter in SUMO2)). Gln185 is subject to N5-methylglutamine. Lys279 participates in a covalent cross-link: Glycyl lysine isopeptide (Lys-Gly) (interchain with G-Cter in ubiquitin). Thr347 carries the phosphothreonine modification. Lys404 is covalently cross-linked (Glycyl lysine isopeptide (Lys-Gly) (interchain with G-Cter in SUMO2)).

This sequence belongs to the eukaryotic release factor 1 family. As to quaternary structure, component of the eRF1-eRF3-GTP ternary complex, composed of ETF1/ERF1 and eRF3 (GSPT1/ERF3A or GSPT2/ERF3B) and GTP. Component of the transient SURF (SMG1-UPF1-eRF1-eRF3) complex. Interacts with JMJD4. The ETF1-GSPT1 complex interacts with JMJD4. Post-translationally, hydroxylation at Lys-63 by JMJD4 promotes its translational termination efficiency. In terms of processing, methylated at Gln-185 by N6AMT1. Ubiquitinated at Lys-279 via 'Lys-6'-linked polyubiquitin chains by RNF14 and RNF25 in response to ribosome collisions (ribosome stalling), leading to its degradation by the proteasome and rescue of stalled ribosomes.

The protein localises to the cytoplasm. In terms of biological role, component of the eRF1-eRF3-GTP ternary complex, a ternary complex that mediates translation termination in response to the termination codons. The eRF1-eRF3-GTP complex binds to a stop codon in the ribosomal A-site. ETF1/ERF1 is responsible for stop codon recognition and inducing hydrolysis of peptidyl-tRNA. Following GTP hydrolysis, eRF3 (GSPT1/ERF3A or GSPT2/ERF3B) dissociates, permitting ETF1/eRF1 to accommodate fully in the A-site, followed by hydrolysis of peptidyl-tRNA. Component of the transient SURF complex which recruits UPF1 to stalled ribosomes in the context of nonsense-mediated decay (NMD) of mRNAs containing premature stop codons. Required for SHFL-mediated translation termination which inhibits programmed ribosomal frameshifting (-1PRF) of mRNA from viruses and cellular genes. This Bos taurus (Bovine) protein is Eukaryotic peptide chain release factor subunit 1 (ETF1).